A 242-amino-acid polypeptide reads, in one-letter code: Biosynthetic peptidoglycan transglycosylase (242 aa).

A helical transmembrane segment spans residues 19–39 (LMVVLAIFWGGGIALFSVAPV).

This sequence belongs to the glycosyltransferase 51 family.

The protein resides in the cell inner membrane. It carries out the reaction [GlcNAc-(1-&gt;4)-Mur2Ac(oyl-L-Ala-gamma-D-Glu-L-Lys-D-Ala-D-Ala)](n)-di-trans,octa-cis-undecaprenyl diphosphate + beta-D-GlcNAc-(1-&gt;4)-Mur2Ac(oyl-L-Ala-gamma-D-Glu-L-Lys-D-Ala-D-Ala)-di-trans,octa-cis-undecaprenyl diphosphate = [GlcNAc-(1-&gt;4)-Mur2Ac(oyl-L-Ala-gamma-D-Glu-L-Lys-D-Ala-D-Ala)](n+1)-di-trans,octa-cis-undecaprenyl diphosphate + di-trans,octa-cis-undecaprenyl diphosphate + H(+). Its pathway is cell wall biogenesis; peptidoglycan biosynthesis. In terms of biological role, peptidoglycan polymerase that catalyzes glycan chain elongation from lipid-linked precursors. The chain is Biosynthetic peptidoglycan transglycosylase from Escherichia coli O81 (strain ED1a).